Here is a 115-residue protein sequence, read N- to C-terminus: DNA-directed RNA polymerase subunit omega (115 aa).

Belongs to the RNA polymerase subunit omega family. As to quaternary structure, the RNAP catalytic core consists of 2 alpha, 1 beta, 1 beta' and 1 omega subunit. When a sigma factor is associated with the core the holoenzyme is formed, which can initiate transcription.

It carries out the reaction RNA(n) + a ribonucleoside 5'-triphosphate = RNA(n+1) + diphosphate. Promotes RNA polymerase assembly. Latches the N- and C-terminal regions of the beta' subunit thereby facilitating its interaction with the beta and alpha subunits. The polypeptide is DNA-directed RNA polymerase subunit omega (Cutibacterium acnes (strain DSM 16379 / KPA171202) (Propionibacterium acnes)).